The following is a 499-amino-acid chain: Leukocyte immunoglobulin-like receptor subfamily A member 4 (499 aa).

The N-terminal stretch at 1-23 is a signal peptide; that stretch reads MTLILTSLLFFGLSLGPRTRVQA. Ig-like C2-type domains lie at 24-118, 123-213, 224-313, and 324-413; these read ENLL…LVVT, PTLS…SDPL, PSLL…DPLD, and PSLS…SEPL. At 24 to 446 the chain is on the extracellular side; sequence ENLLKPILWA…PHLQDYTVEN (423 aa). Residues Cys-49 and Cys-98 are joined by a disulfide bond. N-linked (GlcNAc...) asparagine glycosylation is present at Asn-138. An intrachain disulfide couples Cys-143 to Cys-195. Residues Asn-239, Asn-279, and Asn-300 are each glycosylated (N-linked (GlcNAc...) asparagine). Cys-244 and Cys-295 are joined by a disulfide. Cys-344 and Cys-395 are joined by a disulfide. Tyr-404 is subject to 3'-nitrotyrosine. The chain crosses the membrane as a helical span at residues 447 to 467; the sequence is LIRMGVAGLVLLFLGILLFEA. At 468 to 499 the chain is on the cytoplasmic side; the sequence is QHSQRSPPRCSQEANSRKDNAPFRVVEPWEQI.

As to quaternary structure, interacts with FCER1G; this stabilizes the expression of both proteins at the cell membrane. Interacts with BST2; leads to activation of LILRA4-mediated signaling and down-regulation of the innate immune response to viral pathogens. Detected on plasmacytoid dendritic cells (at protein level). Detected on plasmacytoid dendritic cells, but not on monocytes or B cells.

It is found in the cell membrane. Its function is as follows. Functions coreceptor to limit the innate immune responses to viral infections; signaling occurs via FCER1G. Down-regulates the production of IFNA1, IFNA2, IFNA4, IFNB1 and TNF by plasmacytoid dendritic cells that have been exposed to influenza virus or cytidine-phosphate-guanosine (CpG) dinucleotides, indicating it functions as a negative regulator of TLR7 and TLR9 signaling cascades. Down-regulates interferon production in response to interaction with BST2 on HIV-1 infected cells. Activates a signaling cascade in complex with FCER1G that results in phosphorylation of Src family and Syk kinases and thereby triggers mobilization of intracellular Ca(2+). Does not interfere with the differentiation of plasmacytoid dendritic cells into antigen-presenting cells. In Homo sapiens (Human), this protein is Leukocyte immunoglobulin-like receptor subfamily A member 4.